The chain runs to 355 residues: Putative [LysW]-L-2-aminoadipate/[LysW]-L-glutamate phosphate reductase (355 aa).

13-16 (SGMT) lines the NADP(+) pocket. Cys-153 is an active-site residue. An NADP(+)-binding site is contributed by Asn-323.

It belongs to the NAGSA dehydrogenase family. Type 1 subfamily. LysY sub-subfamily.

It localises to the cytoplasm. It catalyses the reaction [amino-group carrier protein]-C-terminal-N-(1-carboxy-5-oxopentan-1-yl)-L-glutamine + phosphate + NADP(+) = [amino-group carrier protein]-C-terminal-N-(1-carboxy-5-phosphooxy-5-oxopentan-1-yl)-L-glutamine + NADPH + H(+). The enzyme catalyses [amino-group carrier protein]-C-terminal-gamma-(L-glutamyl-5-semialdehyde)-L-glutamate + phosphate + NADP(+) = [amino-group carrier protein]-C-terminal-gamma-(5-phospho-L-glutamyl)-L-glutamate + NADPH + H(+). The protein operates within amino-acid biosynthesis; L-lysine biosynthesis via AAA pathway; L-lysine from L-alpha-aminoadipate (Thermus route): step 3/5. It functions in the pathway amino-acid biosynthesis; L-arginine biosynthesis. Functionally, involved in both the arginine and lysine biosynthetic pathways. The polypeptide is Putative [LysW]-L-2-aminoadipate/[LysW]-L-glutamate phosphate reductase (Aeropyrum pernix (strain ATCC 700893 / DSM 11879 / JCM 9820 / NBRC 100138 / K1)).